Consider the following 303-residue polypeptide: Glycine--tRNA ligase alpha subunit (303 aa).

The protein belongs to the class-II aminoacyl-tRNA synthetase family. In terms of assembly, tetramer of two alpha and two beta subunits.

The protein localises to the cytoplasm. The catalysed reaction is tRNA(Gly) + glycine + ATP = glycyl-tRNA(Gly) + AMP + diphosphate. The sequence is that of Glycine--tRNA ligase alpha subunit from Syntrophomonas wolfei subsp. wolfei (strain DSM 2245B / Goettingen).